Consider the following 629-residue polypeptide: DNA-directed RNA polymerase subunit beta' (629 aa).

Zn(2+) is bound by residues C70, C72, C85, and C88. Mg(2+)-binding residues include D472, D474, and D476.

Belongs to the RNA polymerase beta' chain family. RpoC1 subfamily. In terms of assembly, in plastids the minimal PEP RNA polymerase catalytic core is composed of four subunits: alpha, beta, beta', and beta''. When a (nuclear-encoded) sigma factor is associated with the core the holoenzyme is formed, which can initiate transcription. The cofactor is Mg(2+). Requires Zn(2+) as cofactor.

It is found in the plastid. The protein resides in the chloroplast. It carries out the reaction RNA(n) + a ribonucleoside 5'-triphosphate = RNA(n+1) + diphosphate. Its function is as follows. DNA-dependent RNA polymerase catalyzes the transcription of DNA into RNA using the four ribonucleoside triphosphates as substrates. The polypeptide is DNA-directed RNA polymerase subunit beta' (Pyropia yezoensis (Susabi-nori)).